Reading from the N-terminus, the 258-residue chain is Coiled-coil domain-containing protein 127 (258 aa).

The stretch at 50–170 forms a coiled coil; it reads KEIEKEKEAC…EEALAERQSI (121 aa).

This Sus scrofa (Pig) protein is Coiled-coil domain-containing protein 127 (CCDC127).